Reading from the N-terminus, the 1378-residue chain is DNA-directed RNA polymerase subunit beta (1378 aa).

It belongs to the RNA polymerase beta chain family. The RNAP catalytic core consists of 2 alpha, 1 beta, 1 beta' and 1 omega subunit. When a sigma factor is associated with the core the holoenzyme is formed, which can initiate transcription.

It carries out the reaction RNA(n) + a ribonucleoside 5'-triphosphate = RNA(n+1) + diphosphate. In terms of biological role, DNA-dependent RNA polymerase catalyzes the transcription of DNA into RNA using the four ribonucleoside triphosphates as substrates. The sequence is that of DNA-directed RNA polymerase subunit beta from Dinoroseobacter shibae (strain DSM 16493 / NCIMB 14021 / DFL 12).